Here is a 777-residue protein sequence, read N- to C-terminus: Glucocorticoid receptor (777 aa).

The span at Met1–Asn14 shows a compositional bias: basic and acidic residues. Positions Met1–Glu22 are disordered. Positions Met1–Leu420 are modulating. Thr8 is modified (phosphothreonine). Omega-N-methylarginine is present on Arg23. A phosphoserine mark is found at Ser45, Ser113, Ser134, and Ser141. Positions Asn130–Lys182 are disordered. Residues Ser134–Ala150 are compositionally biased toward low complexity. Residues Pro151 to Val163 show a composition bias toward basic and acidic residues. Polar residues predominate over residues Ser164–Thr174. 3 positions are modified to phosphoserine: Ser203, Ser211, and Ser226. Lys258 is covalently cross-linked (Glycyl lysine isopeptide (Lys-Gly) (interchain with G-Cter in SUMO2)). Ser267 is subject to Phosphoserine. Glycyl lysine isopeptide (Lys-Gly) (interchain with G-Cter in SUMO); alternate cross-links involve residues Lys277 and Lys293. Glycyl lysine isopeptide (Lys-Gly) (interchain with G-Cter in SUMO2); alternate cross-links involve residues Lys277 and Lys293. Residues Ser394–Thr414 are compositionally biased toward low complexity. Residues Ser394–Gly415 form a disordered region. A Phosphoserine modification is found at Ser404. Lys419 participates in a covalent cross-link: Glycyl lysine isopeptide (Lys-Gly) (interchain with G-Cter in ubiquitin). NR C4-type zinc fingers lie at residues Cys421 to Cys441 and Cys457 to Cys481. Positions Cys421–Met486 form a DNA-binding region, nuclear receptor. An N6-acetyllysine mark is found at Lys480, Lys492, Lys494, and Lys495. Residues Gly485–Lys777 form an interaction with CLOCK region. The segment at Asn487–Ala523 is hinge. Positions Thr524–Thr758 constitute an NR LBD domain. The tract at residues Leu532–Leu697 is interaction with CRY1. Lys703 is covalently cross-linked (Glycyl lysine isopeptide (Lys-Gly) (interchain with G-Cter in SUMO)).

This sequence belongs to the nuclear hormone receptor family. NR3 subfamily. In terms of assembly, heteromultimeric cytoplasmic complex with HSP90AA1, HSPA1A/HSPA1B, and FKBP5 or another immunophilin such as PPID, STIP1, or the immunophilin homolog PPP5C. Upon ligand binding FKBP5 dissociates from the complex and FKBP4 takes its place, thereby linking the complex to dynein and mediating transport to the nucleus, where the complex dissociates. Probably forms a complex composed of chaperones HSP90 and HSP70, co-chaperones CDC37, PPP5C, TSC1 and client protein TSC2, CDK4, AKT, RAF1 and NR3C1; this complex does not contain co-chaperones STIP1/HOP and PTGES3/p23. Directly interacts with UNC45A. Binds to DNA as a homodimer, and as heterodimer with NR3C2 or the retinoid X receptor. Binds STAT5A and STAT5B homodimers and heterodimers. Interacts with NRIP1, POU2F1, POU2F2 and TRIM28. Interacts with several coactivator complexes, including the SMARCA4 complex, CREBBP/EP300, TADA2L (Ada complex) and p160 coactivators such as NCOA2 and NCOA6. Interaction with BAG1 inhibits transactivation. Interacts with HEXIM1 and TGFB1I1. Interacts with NCOA1. Interacts with NCOA3, SMARCA4, SMARCC1, SMARCD1, and SMARCE1. Interacts with CLOCK, CRY1 and CRY2 in a ligand-dependent fashion. Interacts with CIART. Interacts with RWDD3. Interacts with UBE2I/UBC9 and this interaction is enhanced in the presence of RWDD3. Interacts with GRIP1. Interacts with NR4A3 (via nuclear receptor DNA-binding domain), represses transcription activity of NR4A3 on the POMC promoter Nur response element (NurRE). Directly interacts with PNRC2 to attract and form a complex with UPF1 and DCP1A; the interaction leads to rapid mRNA degradation. Interacts with GSK3B. Interacts with FNIP1 and FNIP2. Interacts (via C-terminus) with HNRNPU (via C-terminus). Interacts with MCM3AP. Interacts (via domain NR LBD) with HSP90AA1 and HSP90AB1. In the absence of hormonal ligand, interacts with TACC1. Interacts (via NR LBD domain) with ZNF764 (via KRAB domain); the interaction regulates transcription factor activity of NR3C1 by directing its actions toward certain biologic pathways. Acetylation by CLOCK reduces its binding to glucocorticoid response elements and its transcriptional activity. Post-translationally, increased proteasome-mediated degradation in response to glucocorticoids. In terms of processing, phosphorylated in the absence of hormone; becomes hyperphosphorylated in the presence of glucocorticoid. The Ser-203, Ser-226 and Ser-404-phosphorylated forms are mainly cytoplasmic, and the Ser-211-phosphorylated form is nuclear. Phosphorylation at Ser-211 increases transcriptional activity. Phosphorylation at Ser-203, Ser-226 and Ser-404 decreases signaling capacity. Phosphorylation at Ser-404 may protect from glucocorticoid-induced apoptosis. Phosphorylation at Ser-203 and Ser-211 is not required in regulation of chromosome segregation. May be dephosphorylated by PPP5C, attenuates NR3C1 action. Ubiquitinated by UBR5, leading to its degradation: UBR5 specifically recognizes and binds ligand-bound NR3C1 when it is not associated with coactivators (NCOAs). In presence of NCOAs, the UBR5-degron is not accessible, preventing its ubiquitination and degradation. Post-translationally, sumoylation at Lys-277 and Lys-293 negatively regulates its transcriptional activity. Sumoylation at Lys-703 positively regulates its transcriptional activity in the presence of RWDD3. Sumoylation at Lys-277 and Lys-293 is dispensable whereas sumoylation at Lys-703 is critical for the stimulatory effect of RWDD3 on its transcriptional activity. Heat shock increases sumoylation in a RWDD3-dependent manner.

The protein resides in the cytoplasm. It is found in the nucleus. The protein localises to the mitochondrion. Its subcellular location is the cytoskeleton. It localises to the spindle. The protein resides in the microtubule organizing center. It is found in the centrosome. The protein localises to the chromosome. Its subcellular location is the nucleoplasm. Functionally, receptor for glucocorticoids (GC). Has a dual mode of action: as a transcription factor that binds to glucocorticoid response elements (GRE), both for nuclear and mitochondrial DNA, and as a modulator of other transcription factors. Affects inflammatory responses, cellular proliferation and differentiation in target tissues. Involved in chromatin remodeling. Plays a role in rapid mRNA degradation by binding to the 5' UTR of target mRNAs and interacting with PNRC2 in a ligand-dependent manner which recruits the RNA helicase UPF1 and the mRNA-decapping enzyme DCP1A, leading to RNA decay. Could act as a coactivator for STAT5-dependent transcription upon growth hormone (GH) stimulation and could reveal an essential role of hepatic GR in the control of body growth. Mediates glucocorticoid-induced apoptosis. Promotes accurate chromosome segregation during mitosis. May act as a tumor suppressor. May play a negative role in adipogenesis through the regulation of lipolytic and antilipogenic gene expression. This chain is Glucocorticoid receptor (NR3C1), found in Saimiri boliviensis boliviensis (Bolivian squirrel monkey).